The primary structure comprises 225 residues: DNA-binding response regulator MtrA (225 aa).

One can recognise a Response regulatory domain in the interval 4–117 (RILVVDDDAS…ELVARVRARL (114 aa)). D53 is subject to 4-aspartylphosphate. A DNA-binding region (ompR/PhoB-type) is located at residues 125–224 (AEMLSIADVD…VRGVGYKAGP (100 aa)).

Post-translationally, phosphorylated by MtrB.

In terms of biological role, member of the two-component regulatory system MtrA/MtrB. This is DNA-binding response regulator MtrA (mtrA) from Mycobacterium leprae (strain TN).